The following is a 906-amino-acid chain: Cadherin-2 (906 aa).

The N-terminal stretch at 1–25 (MCRIAGGPRTLLPLLAALLQASLEA) is a signal peptide. Residues 26–159 (SGELALCKTG…HSGALQRQKR (134 aa)) constitute a propeptide that is removed on maturation. Ser-96 is subject to Phosphoserine. Cadherin domains lie at 160–267 (DWVI…RPEF), 268–382 (LHQV…PPEF), 383–497 (TAMT…NPYF), 498–603 (APNP…DNAP), and 604–717 (QVLP…RIVG). The Extracellular segment spans residues 160-724 (DWVIPPINLP…IVGAGLGTGT (565 aa)). Position 170 (Glu-170) interacts with Ca(2+). An N-linked (GlcNAc...) asparagine glycan is attached at Asn-190. Ca(2+) contacts are provided by Asp-226, Glu-228, Asp-259, Met-260, Asn-261, Asp-262, and Asn-263. Asn-273 carries an N-linked (GlcNAc...) asparagine glycan. Ca(2+) contacts are provided by Asp-293, Asp-295, and Asn-301. N-linked (GlcNAc...) asparagine glycosylation occurs at Asn-325. Asp-353 is a Ca(2+) binding site. N-linked (GlcNAc...) asparagine glycans are attached at residues Asn-402, Asn-572, Asn-622, Asn-651, and Asn-692. Residues 725 to 745 (IIAILLCIIILLILVLMFVVW) form a helical membrane-spanning segment. Residues 746–906 (MKRRDKERQA…LADMYGGGDD (161 aa)) are Cytoplasmic-facing. The span at 863–880 (SGSTAGSLSSLNSSSSGG) shows a compositional bias: low complexity. A disordered region spans residues 863 to 883 (SGSTAGSLSSLNSSSSGGDQD).

Homodimer (via extracellular region). Can also form heterodimers with other cadherins (via extracellular region). Dimerization occurs in trans, i.e. with a cadherin chain from another cell. Interacts with PCDH8; this complex may also include TAOK2. The interaction with PCDH8 may lead to internalization through TAOK2/p38 MAPK pathway. Identified in a complex containing FGFR4, NCAM1, CDH2, PLCG1, FRS2, SRC, SHC1, GAP43 and CTTN. May interact with OBSCN (via protein kinase domain 2). Interacts with FBXO45. In terms of processing, cleaved by MMP24. Ectodomain cleavage leads to the generation of a soluble 90 kDa N-terminal soluble fragment and a 45 kDa membrane-bound C-terminal fragment 1 (CTF1), which is further cleaved by gamma-secretase into a 35 kDa. Cleavage in neural stem cells by MMP24 affects CDH2-mediated anchorage of neural stem cells to ependymocytes in the adult subependymal zone, leading to modulate neural stem cell quiescence. May be phosphorylated by OBSCN. In terms of tissue distribution, in testis, expressed in Sertoli and germ cells.

It is found in the cell membrane. The protein localises to the sarcolemma. Its subcellular location is the cell junction. The protein resides in the cell surface. It localises to the desmosome. It is found in the adherens junction. Calcium-dependent cell adhesion protein; preferentially mediates homotypic cell-cell adhesion by dimerization with a CDH2 chain from another cell. Cadherins may thus contribute to the sorting of heterogeneous cell types. Acts as a regulator of neural stem cells quiescence by mediating anchorage of neural stem cells to ependymocytes in the adult subependymal zone: upon cleavage by MMP24, CDH2-mediated anchorage is affected, leading to modulate neural stem cell quiescence. Plays a role in cell-to-cell junction formation between pancreatic beta cells and neural crest stem (NCS) cells, promoting the formation of processes by NCS cells. Required for proper neurite branching. Required for pre- and postsynaptic organization. CDH2 may be involved in neuronal recognition mechanism. In hippocampal neurons, may regulate dendritic spine density. This is Cadherin-2 (Cdh2) from Rattus norvegicus (Rat).